The chain runs to 1149 residues: Potassium channel subfamily U member 1 (1149 aa).

At 1 to 24 the chain is on the extracellular side; the sequence is MFQTKLRNETWEDLPKMSCTTEIQ. Residues 25–45 form a helical membrane-spanning segment; the sequence is AAFILSSFVTFFSGLIILLIF. Residues 46-101 lie on the Cytoplasmic side of the membrane; that stretch reads RLIWRSVKKWQIIKGTGIILELFTSGTIARSHVRSLHFQGQFRDHIEMLLSAQTFV. Residues 102–122 traverse the membrane as a helical segment; sequence GQVLVILVFVLSIGSLIIYFI. Residues 123–138 lie on the Extracellular side of the membrane; sequence NSADPVGSCSSYEDKT. A helical membrane pass occupies residues 139 to 159; that stretch reads IPIDLVFNAFFSFYFGLRFMA. Topologically, residues 160 to 163 are cytoplasmic; that stretch reads ADDK. The chain crosses the membrane as a helical span at residues 164 to 184; it reads IKFWLEMNSIVDIFTIPPTFI. The Extracellular portion of the chain corresponds to 185 to 188; the sequence is SYYL. Residues 189-209 form a helical; Voltage-sensor membrane-spanning segment; sequence KSNWLGLRFLRALRLLELPQI. At 210 to 226 the chain is on the cytoplasmic side; sequence LQILRAIKTSNSVKFSK. Residues 227 to 247 form a helical membrane-spanning segment; the sequence is LLSIILSTWFTAAGFIHLVEN. The Extracellular portion of the chain corresponds to 248–259; the sequence is SGDPWLKGRNSQ. Residues 260–282 constitute an intramembrane region (pore-forming); that stretch reads NISYFESIYLVMATTSTVGFGDV. The short motif at 276–279 is the Selectivity for potassium element; it reads TVGF. Over 283 to 291 the chain is Extracellular; sequence VAKTSLGRT. The chain crosses the membrane as a helical span at residues 292–312; sequence FIMFFTLGSLILFANYIPEMV. Residues 313–1149 are Cytoplasmic-facing; that stretch reads ELFANKRKYT…EDPFAYSEPL (837 aa). RCK N-terminal domains follow at residues 331 to 473 and 713 to 884; these read KKFI…DNII and RNHI…EGSL. Disordered regions lie at residues 828-854 and 1118-1149; these read QIDS…NEKS and SQIP…SEPL. Residues 830-840 show a composition bias toward low complexity; the sequence is DSSSDPSPSVS. Over residues 1125 to 1135 the composition is skewed to basic and acidic residues; the sequence is NAKENERKTSD.

The protein belongs to the potassium channel family. Calcium-activated (TC 1.A.1.3) subfamily. KCa5.1/KCNU1 sub-subfamily. Homotetramer; which constitutes the activated potassium channel. Interacts with LRRC52; this interaction changes channel gating properties, such as shifting gating to more negative potentials at a given pH. As to expression, testis-specific.

Its subcellular location is the cell membrane. It localises to the cell projection. It is found in the cilium. The protein localises to the flagellum membrane. It catalyses the reaction K(+)(in) = K(+)(out). Its activity is regulated as follows. Regulated by changes in cytosolic pH; activated by alkalization. Activated by intracellular Ca(2+). Despite strong sequence similarity, human KCNU1 channels are significantly more sensitive to activation by internal Ca(2+) and less pH-sensitive than mouse KCNU1. VU0546110 acts as a selective inhibitor. The auxiliary subunit LRRC52 shifts the activation of KCNU1 to more negative potentials at a given pH. In terms of biological role, testis-specific potassium channel activated by both intracellular pH and membrane voltage that mediates export of K(+). Represents the primary spermatozoan K(+) current. The channel underlies a pH-triggered membrane hyperpolarization during the process of sperm capacitation, as sperm encounter the alkaline environment near the ovum in the female reproductive tract, thereby playing an essential for male fertility. This is Potassium channel subfamily U member 1 from Homo sapiens (Human).